The sequence spans 358 residues: MFERLEAVEERYEKLNQLLMDPEVINDPKKLRDYSKEQSDLSETVQTYREYKSVRKQLDEAKAMLEEKLDPEMREMVKEEIDELEQKEEELVNKLKILLLPKDPNDEKNVIMEIRAAAGGEEAALFAGDLYRMYTRYAESQGWKTEVIEASPTGLGGYKEIIFTIIGKGAYSKLKYENGAHRVQRVPETESGGRIHTSTATVACLPEMEEIEVEINEKDIRVDTFASSGPGGQSVNTTMSAVRLTHIPTGIVVTCQDEKSQIKNKEKAMKVLRARIYDKYQQEARAEYDQTRKQAVGTGDRSERIRTYNFPQNRVTDHRIGLTIQKLDQVLDGNLDEIIEALILDDQSKKLEQANNEL.

N5-methylglutamine is present on Q233.

Belongs to the prokaryotic/mitochondrial release factor family. Methylated by PrmC. Methylation increases the termination efficiency of RF1.

It localises to the cytoplasm. Its function is as follows. Peptide chain release factor 1 directs the termination of translation in response to the peptide chain termination codons UAG and UAA. The protein is Peptide chain release factor 1 of Geobacillus sp. (strain WCH70).